The sequence spans 989 residues: Phosphoenolpyruvate carboxylase (989 aa).

Residues H175 and K630 contribute to the active site.

It belongs to the PEPCase type 1 family. It depends on Mg(2+) as a cofactor.

It catalyses the reaction oxaloacetate + phosphate = phosphoenolpyruvate + hydrogencarbonate. Forms oxaloacetate, a four-carbon dicarboxylic acid source for the tricarboxylic acid cycle. The chain is Phosphoenolpyruvate carboxylase from Prochlorococcus marinus (strain MIT 9312).